We begin with the raw amino-acid sequence, 231 residues long: Sugar fermentation stimulation protein homolog (231 aa).

Belongs to the SfsA family.

The protein is Sugar fermentation stimulation protein homolog of Pyrobaculum islandicum (strain DSM 4184 / JCM 9189 / GEO3).